Reading from the N-terminus, the 508-residue chain is Phenylalanine--tRNA ligase alpha subunit (508 aa).

Alanine 2 carries the post-translational modification N-acetylalanine. Position 190 is a phosphothreonine (threonine 190). Serine 193 and serine 301 each carry phosphoserine. The residue at position 311 (lysine 311) is an N6-acetyllysine. Residues threonine 329, 372-374, and tyrosine 412 each bind L-phenylalanine; that span reads QIE. Glutamate 414 contributes to the Mg(2+) binding site. L-phenylalanine is bound at residue phenylalanine 438.

Belongs to the class-II aminoacyl-tRNA synthetase family. Phe-tRNA synthetase alpha subunit type 2 subfamily. In terms of assembly, heterotetramer; dimer of two heterodimers formed by FARSA and FARSB. It depends on Mg(2+) as a cofactor.

The protein localises to the cytoplasm. The catalysed reaction is tRNA(Phe) + L-phenylalanine + ATP = L-phenylalanyl-tRNA(Phe) + AMP + diphosphate + H(+). This chain is Phenylalanine--tRNA ligase alpha subunit (FARSA), found in Pongo abelii (Sumatran orangutan).